Reading from the N-terminus, the 168-residue chain is Phosphopantetheine adenylyltransferase (168 aa).

Residue Thr-17 coordinates substrate. Residues 17–18 (TF) and His-25 contribute to the ATP site. The substrate site is built by Lys-49, Leu-81, and Arg-95. ATP contacts are provided by residues 96 to 98 (GLR), Glu-106, and 131 to 137 (LMYISST).

It belongs to the bacterial CoaD family. As to quaternary structure, homohexamer. Mg(2+) is required as a cofactor.

The protein resides in the cytoplasm. The catalysed reaction is (R)-4'-phosphopantetheine + ATP + H(+) = 3'-dephospho-CoA + diphosphate. It participates in cofactor biosynthesis; coenzyme A biosynthesis; CoA from (R)-pantothenate: step 4/5. Reversibly transfers an adenylyl group from ATP to 4'-phosphopantetheine, yielding dephospho-CoA (dPCoA) and pyrophosphate. The polypeptide is Phosphopantetheine adenylyltransferase (Legionella pneumophila (strain Paris)).